A 262-amino-acid polypeptide reads, in one-letter code: Cytochrome c oxidase subunit 3 (262 aa).

The next 6 membrane-spanning stretches (helical) occupy residues 39-59 (YDISLFLLGNIITILTVYQWW), 83-103 (GMILFILSEVLFFVSFFWAFF), 120-140 (MGIISFNPFQIPLLNTAILLA), 163-183 (GLFFTVLLGIYFTILQAYEYI), 201-221 (ATGFHGVHVLIGTTFLLVCLL), and 240-260 (AWYWHFVDVVWLFLYITIYWW).

The protein belongs to the cytochrome c oxidase subunit 3 family. Component of the cytochrome c oxidase (complex IV, CIV), a multisubunit enzyme composed of a catalytic core of 3 subunits and several supernumerary subunits. The complex exists as a monomer or a dimer and forms supercomplexes (SCs) in the inner mitochondrial membrane with ubiquinol-cytochrome c oxidoreductase (cytochrome b-c1 complex, complex III, CIII).

It localises to the mitochondrion inner membrane. The enzyme catalyses 4 Fe(II)-[cytochrome c] + O2 + 8 H(+)(in) = 4 Fe(III)-[cytochrome c] + 2 H2O + 4 H(+)(out). Functionally, component of the cytochrome c oxidase, the last enzyme in the mitochondrial electron transport chain which drives oxidative phosphorylation. The respiratory chain contains 3 multisubunit complexes succinate dehydrogenase (complex II, CII), ubiquinol-cytochrome c oxidoreductase (cytochrome b-c1 complex, complex III, CIII) and cytochrome c oxidase (complex IV, CIV), that cooperate to transfer electrons derived from NADH and succinate to molecular oxygen, creating an electrochemical gradient over the inner membrane that drives transmembrane transport and the ATP synthase. Cytochrome c oxidase is the component of the respiratory chain that catalyzes the reduction of oxygen to water. Electrons originating from reduced cytochrome c in the intermembrane space (IMS) are transferred via the dinuclear copper A center (CU(A)) of subunit 2 and heme A of subunit 1 to the active site in subunit 1, a binuclear center (BNC) formed by heme A3 and copper B (CU(B)). The BNC reduces molecular oxygen to 2 water molecules using 4 electrons from cytochrome c in the IMS and 4 protons from the mitochondrial matrix. The sequence is that of Cytochrome c oxidase subunit 3 (mt:CoIII) from Drosophila yakuba (Fruit fly).